A 683-amino-acid chain; its full sequence is Methionine--tRNA ligase (683 aa).

The short motif at 15–25 is the 'HIGH' region element; it reads PYANGPIHLGH. Cys146, Cys149, Cys159, and Cys162 together coordinate Zn(2+). The 'KMSKS' region motif lies at 332 to 336; sequence KMSKS. Lys335 lines the ATP pocket. The tRNA-binding domain maps to 581 to 683; it reads DFFKVDLRVA…AGAKAGQRVK (103 aa).

This sequence belongs to the class-I aminoacyl-tRNA synthetase family. MetG type 1 subfamily. Homodimer. Zn(2+) is required as a cofactor.

Its subcellular location is the cytoplasm. The enzyme catalyses tRNA(Met) + L-methionine + ATP = L-methionyl-tRNA(Met) + AMP + diphosphate. Functionally, is required not only for elongation of protein synthesis but also for the initiation of all mRNA translation through initiator tRNA(fMet) aminoacylation. This Histophilus somni (strain 129Pt) (Haemophilus somnus) protein is Methionine--tRNA ligase.